Here is an 81-residue protein sequence, read N- to C-terminus: Escargot/snail protein homolog (81 aa).

4 consecutive C2H2-type zinc fingers follow at residues 1–5 (HQQFH), 17–39 (FSCK…IRTH), 43–65 (CKCH…IRTH), and 71–81 (FSCQHCNRAFA).

The protein belongs to the snail C2H2-type zinc-finger protein family.

It localises to the nucleus. In Apis mellifera (Honeybee), this protein is Escargot/snail protein homolog.